Here is a 369-residue protein sequence, read N- to C-terminus: MKITAIHLYAIRLPLRNPFVISYGSYSDMPSIIVKMETDEGIIGYGEGVADDHVTGESWESTFHTLKHTLTPALIGQNPMNIEKIHDMMDNTIYGVPTAKAAIDIACFDIMGKKLNQPVYQLIGGRYHEEFPVTHVLSIADPENMAEEAASMIQKGYQSFKMKVGTNVKEDVKRIEAVRERVGNDIAIRVDVNQGWKNSANTLTALRSLGHLNIDWIEQPVIADDIDAMAHIRSKTDLPLMIDEGLKSSREMRQIIKLEAADKVNIKLMKCGGIYPAVKLAHQAEMAGIECQVGSMVESSVASSAGFHVAFSKKIITSVELTGPLKFTKDIGNLHYDVPFIRLNEKPGLGIEINEDTLQELTVFQDIVR.

Residues Tyr26, Asp51, 161 to 163 (KMK), and 191 to 193 (DVN) each bind substrate. Residues Asp191, Glu218, and Asp243 each coordinate Mg(2+). Substrate-binding positions include Lys267, 295–296 (SM), and 320–322 (ELT).

Belongs to the mandelate racemase/muconate lactonizing enzyme family. The cofactor is Mg(2+).

Functionally, catalyzes efficient racemization of N-succinyl-L-Arg and N-succinyl-L-Lys, suggesting that these are physiological substrates of this enzyme. Has low activity with L-Asp-L-Lys, and even lower activity with L-Leu-L-Arg, L-Leu-L-Lys, N-succinyl-L-His and N-succinyl-L-Met (in vitro). In Bacillus cereus (strain ATCC 14579 / DSM 31 / CCUG 7414 / JCM 2152 / NBRC 15305 / NCIMB 9373 / NCTC 2599 / NRRL B-3711), this protein is N-succinyl-L-Arg/Lys racemase.